Here is an 888-residue protein sequence, read N- to C-terminus: Protein translocase subunit SecA (888 aa).

ATP contacts are provided by residues glutamine 81, 99–103 (GEGKT), and aspartate 489.

It belongs to the SecA family.

Its subcellular location is the plastid. It is found in the chloroplast stroma. The protein localises to the chloroplast thylakoid membrane. It catalyses the reaction ATP + H2O + cellular proteinSide 1 = ADP + phosphate + cellular proteinSide 2.. Its function is as follows. Has a central role in coupling the hydrolysis of ATP to the transfer of proteins across the thylakoid membrane. The chain is Protein translocase subunit SecA from Trieres chinensis (Marine centric diatom).